Consider the following 147-residue polypeptide: MSDYFEELGHEPTGPLGANDLARNLKRLQVLAIMNGIDMEIEVPEASKRAILELPVHEIVKSDEGGDLECSVCKEPAEEGQKYRILPCKHEFHEECILLWLKKTNSCPLCRYELETDDPVYEELRRFRQDEANRRERENTLLDSMFG.

The RING-type; atypical zinc finger occupies 70 to 111; that stretch reads CSVCKEPAEEGQKYRILPCKHEFHEECILLWLKKTNSCPLCR.

This sequence belongs to the RNF181 family.

It carries out the reaction S-ubiquitinyl-[E2 ubiquitin-conjugating enzyme]-L-cysteine + [acceptor protein]-L-lysine = [E2 ubiquitin-conjugating enzyme]-L-cysteine + N(6)-ubiquitinyl-[acceptor protein]-L-lysine.. It functions in the pathway protein modification; protein ubiquitination. Its function is as follows. E3 ubiquitin-protein ligase which accepts ubiquitin from an E2 ubiquitin-conjugating enzyme in the form of a thioester and then directly transfers the ubiquitin to targeted substrates. The protein is E3 ubiquitin-protein ligase RNF181 homolog of Drosophila melanogaster (Fruit fly).